The sequence spans 473 residues: ATP synthase subunit beta (473 aa).

An ATP-binding site is contributed by 153–160 (GGAGVGKT).

Belongs to the ATPase alpha/beta chains family. F-type ATPases have 2 components, CF(1) - the catalytic core - and CF(0) - the membrane proton channel. CF(1) has five subunits: alpha(3), beta(3), gamma(1), delta(1), epsilon(1). CF(0) has three main subunits: a(1), b(2) and c(9-12). The alpha and beta chains form an alternating ring which encloses part of the gamma chain. CF(1) is attached to CF(0) by a central stalk formed by the gamma and epsilon chains, while a peripheral stalk is formed by the delta and b chains.

The protein resides in the cell membrane. It carries out the reaction ATP + H2O + 4 H(+)(in) = ADP + phosphate + 5 H(+)(out). Produces ATP from ADP in the presence of a proton gradient across the membrane. The catalytic sites are hosted primarily by the beta subunits. This is ATP synthase subunit beta from Rickettsia africae (strain ESF-5).